Here is a 201-residue protein sequence, read N- to C-terminus: Probable GTP-binding protein EngB (201 aa).

Positions 25–199 (HGIEIAFIGY…KSKLNFWYEK (175 aa)) constitute an EngB-type G domain. GTP is bound by residues 33–40 (GYSNSGKS), 60–64 (GRTQL), 78–81 (DLPG), 145–148 (TKCD), and 178–180 (FSS). Residues Ser-40 and Thr-62 each contribute to the Mg(2+) site.

This sequence belongs to the TRAFAC class TrmE-Era-EngA-EngB-Septin-like GTPase superfamily. EngB GTPase family. Requires Mg(2+) as cofactor.

Necessary for normal cell division and for the maintenance of normal septation. In Buchnera aphidicola subsp. Schizaphis graminum (strain Sg), this protein is Probable GTP-binding protein EngB.